The following is a 215-amino-acid chain: Pyrrolidone-carboxylate peptidase (215 aa).

Catalysis depends on residues Glu80, Cys143, and His167.

The protein belongs to the peptidase C15 family. As to quaternary structure, homotetramer.

The protein resides in the cytoplasm. The catalysed reaction is Release of an N-terminal pyroglutamyl group from a polypeptide, the second amino acid generally not being Pro.. Removes 5-oxoproline from various penultimate amino acid residues except L-proline. This chain is Pyrrolidone-carboxylate peptidase, found in Bacillus cereus (strain B4264).